The following is a 431-amino-acid chain: Histidinol dehydrogenase (431 aa).

NAD(+)-binding residues include Tyr-127, Gln-189, and Asn-212. Substrate is bound by residues Ser-237, Gln-259, and His-262. Positions 259 and 262 each coordinate Zn(2+). Active-site proton acceptor residues include Glu-326 and His-327. Residues His-327, Asp-360, Glu-414, and His-419 each contribute to the substrate site. Asp-360 is a binding site for Zn(2+). Residue His-419 coordinates Zn(2+).

The protein belongs to the histidinol dehydrogenase family. Zn(2+) is required as a cofactor.

The catalysed reaction is L-histidinol + 2 NAD(+) + H2O = L-histidine + 2 NADH + 3 H(+). Its pathway is amino-acid biosynthesis; L-histidine biosynthesis; L-histidine from 5-phospho-alpha-D-ribose 1-diphosphate: step 9/9. Catalyzes the sequential NAD-dependent oxidations of L-histidinol to L-histidinaldehyde and then to L-histidine. The sequence is that of Histidinol dehydrogenase from Xanthomonas campestris pv. campestris (strain 8004).